Reading from the N-terminus, the 580-residue chain is Kelch-like protein 38 (580 aa).

The 68-residue stretch at T34–A101 folds into the BTB domain. The BACK domain maps to C136–A237. 6 Kelch repeats span residues F284 to R331, V333 to N382, F383 to Q430, L432 to E478, K479 to N520, and L522 to C572.

The protein is Kelch-like protein 38 (Klhl38) of Rattus norvegicus (Rat).